The sequence spans 146 residues: Small ribosomal subunit protein bS6 (146 aa).

The segment at 94–146 (GPITTPSPMMQEGKSRPPHSSDEDSENTAPAKAKTADSPGEDTRTTEESDPKP) is disordered. Composition is skewed to basic and acidic residues over residues 106–115 (GKSRPPHSSD) and 134–146 (EDTRTTEESDPKP).

Belongs to the bacterial ribosomal protein bS6 family.

In terms of biological role, binds together with bS18 to 16S ribosomal RNA. This is Small ribosomal subunit protein bS6 from Nitrosomonas europaea (strain ATCC 19718 / CIP 103999 / KCTC 2705 / NBRC 14298).